The primary structure comprises 224 residues: Urease accessory protein UreF (224 aa).

This sequence belongs to the UreF family. As to quaternary structure, ureD, UreF and UreG form a complex that acts as a GTP-hydrolysis-dependent molecular chaperone, activating the urease apoprotein by helping to assemble the nickel containing metallocenter of UreC. The UreE protein probably delivers the nickel.

It localises to the cytoplasm. Its function is as follows. Required for maturation of urease via the functional incorporation of the urease nickel metallocenter. This chain is Urease accessory protein UreF, found in Escherichia coli O157:H7.